The chain runs to 454 residues: MDYAFIVFLVCFVSGTLGNRRRAKRDVDEVTSGINQLVNQLNNVQQDTAAIKSALEELKTEVSASPSTVSQVSEVVNTVGSSLTKFTSGDAFNIVSGCLDLLSTVASTFGGPYGIAISAVISLVSSILSLFAGDGFDSATRKVIEEAFKTHRDQELRDSVNGARRTFNDVIAFLKGASKHGNVTEQELEVISKGVPLTKLSDTLGILESRINRGSTSTDAAEAERTVEFIFLYLQLATMRDTLITNFILILKQVPAADTYANAVSISLDANKESVRETIDFLHNMEAKNAVCGAYYYPIYHSEMTKSILSFAKFFGLPDPPRNTFGGVYRVQNRYWPTWYICKESYMGNHMFRGCSNVRSPSVQIRALENGYQKINLRGKNMYITKHAQGWAWGTADNDPGEQGYFVFVPLKSGYYMISTKKWPNYFVYMESSASGYIRSWNHNPGLQGHWRIL.

The first 18 residues, 1 to 18, serve as a signal peptide directing secretion; that stretch reads MDYAFIVFLVCFVSGTLG. A propeptide spanning residues 19-25 is cleaved from the precursor; it reads NRRRAKR. Residues 27–61 are a coiled coil; the sequence is VDEVTSGINQLVNQLNNVQQDTAAIKSALEELKTE.

The protein belongs to the jellyfish toxin family. Type II subfamily. As to quaternary structure, oligomer. Contains 2 disulfide bonds. As to expression, nematocytes.

It localises to the secreted. Its subcellular location is the nematocyst. It is found in the target cell membrane. Functionally, the fraction containing this toxin and CfTX-A shows potent hemolytic activity. This fraction causes minor effects on the cardiovascular system of anesthetized rats (at 25 ug/kg), since it has no significant effects on heart rate but produces relatively small increases in mean arterial pressure. This Chironex fleckeri (Australian box jellyfish) protein is Toxin CfTX-A.